The following is a 155-amino-acid chain: Eosinophil cationic protein (155 aa).

The N-terminal stretch at 1–25 is a signal peptide; sequence MGLKLLESRLCLLLSLGLVLMLASC. The active-site Proton acceptor is H38. Intrachain disulfides connect C47/C106, C61/C118, C79/C133, and C86/C94. 62 to 66 contributes to the substrate binding site; that stretch reads KDINT. 2 N-linked (GlcNAc...) asparagine glycosylation sites follow: N88 and N107. Residue H150 is the Proton donor of the active site.

Belongs to the pancreatic ribonuclease family.

It is found in the cytoplasmic granule. In terms of biological role, cytotoxin and helminthotoxin with ribonuclease activity. Possesses a wide variety of biological activities. This chain is Eosinophil cationic protein (Rnase3), found in Rattus norvegicus (Rat).